A 112-amino-acid chain; its full sequence is uncharacterized protein (112 aa).

The HTH cro/C1-type domain maps to 6 to 60 (LRQLRKAHKLTMEQLAEKIGIAKSSYGGYEAESKKPPLDKLVILARLYDVSVDYI). Positions 17–36 (MEQLAEKIGIAKSSYGGYEA) form a DNA-binding region, H-T-H motif.

This is an uncharacterized protein from Bacillus subtilis (strain 168).